We begin with the raw amino-acid sequence, 585 residues long: MGRIVRVTGPLVVADGMKGAKMYEVVRVGEMGLIGEIIRLEGDRAVIQVYEETAGIKPGEPVIGTGSSLSVELGPGLLTSMYDGIQRPLEKLRELSGDFIARGLTAPALPRDKKWHFTPTVKVGDRVTGGDILGVVPETSIIEHKILVPPWVEGEIVEIAEEGDYTVEEVIAKVKKPDGTIEELKMYHRWPVRVKRPYKNKLPPEVPLITGQRTIDTFFSIAKGGTAAIPGPFGSGKTVTQHQLAKWSDAQVVVYIGCGERGNEMTDVLEEFPKLKDPKTGKPLMERTVLIANTSNMPVAAREASIYTGITIAEYFRDQGYDVALMADSTSRWAEALREISGRLEEMPGEEGYPAYLASKIAEFYERAGRVVTLGSEPRVGSVSVIGAVSPPGGDFSEPVVQNTLRVVKVFWALDADLARRRHFPAINWLRSYSLYLDAVQDWWHKNVDPEWRKMRDTAMALLQKEAELQEIVRIVGPDALPDREKAILIVTRMLREDYLQQDAFDEVDTYCPPKKQVTMMRVILNFYNRTMEAVDRGVPVDEIARLPVREKIGRMKFEPDVEKIRALIDETNAQFEELFKKYGV.

Position 231-238 (231-238) interacts with ATP; the sequence is GPFGSGKT.

Belongs to the ATPase alpha/beta chains family. Has multiple subunits with at least A(3), B(3), C, D, E, F, H, I and proteolipid K(x).

The protein localises to the cell membrane. The catalysed reaction is ATP + H2O + 4 H(+)(in) = ADP + phosphate + 5 H(+)(out). Component of the A-type ATP synthase that produces ATP from ADP in the presence of a proton gradient across the membrane. The A chain is the catalytic subunit. The polypeptide is A-type ATP synthase subunit A (Thermococcus gammatolerans (strain DSM 15229 / JCM 11827 / EJ3)).